The following is a 53-amino-acid chain: Membrane antigen containing repeating peptides (53 aa).

6 consecutive repeat copies span residues 1 to 10, 11 to 20, 21 to 30, 31 to 40, 41 to 50, and 51 to 53. Positions 1-53 are 6 X 10 AA tandem repeats; the sequence is EAEEAARLQAEAEEAARQQAEAEEAARLQAEAEEAARLQAEAEEAARLQAEAE. A disordered region spans residues 1–53; the sequence is EAEEAARLQAEAEEAARQQAEAEEAARLQAEAEEAARLQAEAEEAARLQAEAE.

The protein resides in the membrane. This Leishmania major protein is Membrane antigen containing repeating peptides.